Here is an 833-residue protein sequence, read N- to C-terminus: Transcription factor MBP1 (833 aa).

One can recognise an HTH APSES-type domain in the interval 5–111 (IYSARYSGVD…FTQTDGSASP (107 aa)). Residues 36-57 (ATHILKAANFAKAKRTRILEKE) constitute a DNA-binding region (H-T-H motif). Disordered regions lie at residues 104–223 (QTDG…QSPT) and 280–329 (QQSS…SPII). Residue serine 110 is modified to Phosphoserine. Basic residues predominate over residues 115–129 (PKHHHASKVDRKKAI). The segment covering 139-149 (ETKRNNKKAEE) has biased composition (basic and acidic residues). Polar residues predominate over residues 201 to 223 (PNSSISTTQLPSIRSTMGPQSPT). A compositionally biased stretch (low complexity) spans 280–307 (QQSSLIQTQQTESMATSVSSSPSLPTSP). Phosphothreonine is present on threonine 325. 2 positions are modified to phosphoserine: serine 326 and serine 330. ANK repeat units follow at residues 394–423 (ELHT…SIRS) and 512–541 (NGDT…LTTI). Serine 827 carries the post-translational modification Phosphoserine.

As to quaternary structure, component of the transcription complex MCB-binding factor (MBF) composed of SWI6 and MBP1. Interacts with MSA1.

Its subcellular location is the nucleus. Binds to MCB elements (Mlu I cell cycle box) found in the promoter of most DNA synthesis genes. Transcriptional activation by MBF has an important role in the transition from G1 to S phase. It may have a dual role in that it behaves as an activator of transcription at the G1-S boundary and as a repressor during other stages of the cell cycle. The protein is Transcription factor MBP1 (MBP1) of Saccharomyces cerevisiae (strain ATCC 204508 / S288c) (Baker's yeast).